We begin with the raw amino-acid sequence, 301 residues long: Probable aspartoacylase (301 aa).

Positions 13 and 16 each coordinate Zn(2+). Substrate contacts are provided by residues Arg54 and 61-62; that span reads NR. Zn(2+) is bound at residue His105. Positions 163 and 273 each coordinate substrate.

This sequence belongs to the AspA/AstE family. Aspartoacylase subfamily. Requires Zn(2+) as cofactor.

The catalysed reaction is an N-acyl-L-aspartate + H2O = a carboxylate + L-aspartate. This Prochlorococcus marinus (strain AS9601) protein is Probable aspartoacylase.